The sequence spans 870 residues: Probable disease resistance protein At1g59620 (870 aa).

Positions 123 to 432 (DKRNMRQTFS…AAEGMPRPRY (310 aa)) constitute an NB-ARC domain. Position 167 to 174 (167 to 174 (GMGGIGKT)) interacts with ATP. LRR repeat units follow at residues 543–567 (LQLMRVLDLHGVEFGGELPSSIGLL), 568–590 (IHLRYLSLYRAKASHLPSSMQNL), 703–726 (MSGIEGLVLDCDQLKHLNLRIYMP), 735–758 (PWHLRNISLAECCLKEDPMPILEK), 759–786 (LLQLNEVSLSHQSFCGKRMVCSDGGFPQ), and 808–833 (MPRLHKLTIRNDPKLKELPDGLKFIT).

It belongs to the disease resistance NB-LRR family.

Functionally, probable disease resistance protein. This Arabidopsis thaliana (Mouse-ear cress) protein is Probable disease resistance protein At1g59620.